The following is an 868-amino-acid chain: MAMPLCSLTSYNPITTTLRGHHFLTINAYVKTQCIPCFFIKLHTRSSGSKQRIIDLRSGSSNIVACVGEGATSLSSHSDIMKTAKREEIPPGVWKDDISDSIMSSHKPEADEKRVEILIAEIKSMFRGMGDGETTPSAYDTAWVAKIPALDGSDHPHFPQTLQWILQNQLQDGSWGEGTYFSTYDRLLATLACIITLTVWRTGQTQVRQGIEFFRKHAGTMEDEADNHQPIGFEFVFPAMINEAKSLCLDLPYDTPFIKQIIEKREAKLKMIPTDTLYTVPTTFLYYLEGLQEIIDCQKIIKLQSKDGSFLSSPASTAAVFMCTGNTKCLEFLNFVLIKFGNHVPCQYPLDLFERLWAVDIVERLGIDRHFKKEIKDALDYVYSHWDERGIRWARENPVAYIDVMATGIRILRLHRYNVSSDILKTFRDENGEFYRFPGQSERGVTDMLNLNRCSHVAFPGETVMEEAKLCTERYLWNALENVNPLDKWGLKENIRGEVEYALKYPWLRRLPRLETRNYIEHYGANDVWLGKMMHMMPYINDRKYLELAKLDFNNVQSIHQKELRELRRWWKSSGFAELNFLPDRVAEIFFSIASSMFEPELATCRAVYTKSTLCTVILDGFYDVHGSAEDIMLFNEAVKRWDHSLLDRMAEHIKTCFLALYNVVNEIAEEGRKRQGHDVLPYIRNLWEIQLESFTKEAEWSRAEHVPSFHEYIEAAAISSALPTLVLIGVIFTGEVLTDHILSQIDYRSKFAYLMSLTGRLANDTKTYQVERGQGEVASAIQCYMKENPELSEEEALEYIYRLMENALADFKCEFLNTKDVPEYCRRLVFDNARSMQLIYMEGDGFKLSHETEIKQHVKKILFEPVA.

5 residues coordinate Mg(2+): Asp620, Asp624, Asn764, Thr768, and Glu772.

The protein belongs to the terpene synthase family. Tpsd subfamily. Requires Mg(2+) as cofactor.

It carries out the reaction (+)-copalyl diphosphate = (-)-pimara-8(14),15-diene + diphosphate. Its pathway is terpene metabolism; oleoresin biosynthesis. In terms of biological role, involved in defensive oleoresin formation in conifers in response to insect attack or other injury. Involved in diterpene (C20) olefins biosynthesis. Monofunctional enzyme lacking the DXDD motif in the class II active site relevant for the cyclization of geranylgeranyl diphosphate (GGPP). Requires (+)-copalyl diphosphate ((+)-CPP) as substrate, but no activity with GGPP or ent-CPP. Pimaradiene is the major products of the enzyme. This Pinus contorta (Shore pine) protein is Monofunctional pimaradiene synthase.